We begin with the raw amino-acid sequence, 461 residues long: Nuclear distribution protein PAC1 (461 aa).

Positions 9–41 (QAEELHKAIIAYLSANNLSSSATALRTELGLAE) constitute a LisH domain. Residues 61–88 (TSVVRLQKKIMDLESRNNALQSELDNAT) adopt a coiled-coil conformation. WD repeat units follow at residues 114–155 (SHQN…RTIK), 157–197 (HTRP…KNIR), 201–248 (GHDH…CLKT), 251–290 (GHTA…PENR), 295–355 (GHDH…LKTL), 357–396 (GHDN…KCVK), 401–444 (VHER…VRIR), and 446–461 (VIAT…IFAN).

Belongs to the WD repeat LIS1/nudF family. As to quaternary structure, self-associates. Interacts with NDL1 and dynein.

It localises to the cytoplasm. The protein localises to the cytoskeleton. It is found in the spindle pole. Functionally, positively regulates the activity of the minus-end directed microtubule motor protein dynein. May enhance dynein-mediated microtubule sliding by targeting dynein to the microtubule plus end. Required for nuclear migration during vegetative growth as well as development. Required for retrograde early endosome (EE) transport from the hyphal tip. Required for localization of dynein to the mitotic spindle poles. Recruits additional proteins to the dynein complex at SPBs. This chain is Nuclear distribution protein PAC1, found in Pyricularia oryzae (strain 70-15 / ATCC MYA-4617 / FGSC 8958) (Rice blast fungus).